Here is a 1588-residue protein sequence, read N- to C-terminus: Ubiquitin carboxyl-terminal hydrolase 54 (1588 aa).

At arginine 12 the chain carries Omega-N-methylarginine. Positions 31-352 (KGLSNEPGQN…QPLLLLYADP (322 aa)) constitute a USP domain. Residue cysteine 42 is the Nucleophile of the active site. 12 residues coordinate Zn(2+): histidine 67, cysteine 69, cysteine 74, cysteine 77, histidine 133, cysteine 145, cysteine 150, histidine 153, cysteine 166, cysteine 169, cysteine 225, and cysteine 229. Histidine 302 acts as the Proton acceptor in catalysis. Basic and acidic residues-rich tracts occupy residues 382–391 (GHLTDSECNQ) and 424–434 (SEGETLKEKQA). Disordered stretches follow at residues 382–519 (GHLT…PTWR), 555–577 (FTPD…RSQH), and 601–624 (ESGY…PPDS). Serine 424 carries the post-translational modification Phosphoserine. The span at 453-471 (TVSNMIHSRPSLASQTSAG) shows a compositional bias: polar residues. The span at 499-513 (TESTSSEAKSSSSSK) shows a compositional bias: low complexity. The segment covering 555–572 (FTPDEVSKPTANDIKDGG) has biased composition (basic and acidic residues). Residues 601–616 (ESGYESSERNSSSPVS) are compositionally biased toward low complexity. 2 positions are modified to phosphoserine: serine 613 and serine 616. The stretch at 682-712 (ELDELQEEVVRRAQEQELRKKREKELEAAKG) forms a coiled coil. Disordered regions lie at residues 801–834 (RSLQ…PQPT), 1089–1182 (QNTS…PDMY), 1221–1242 (SQVK…SHPR), and 1491–1561 (WGNL…RSPG). The span at 808-826 (QQQASSQQPVQPSASLPSQ) shows a compositional bias: low complexity. Basic and acidic residues predominate over residues 1126–1147 (GREHCRWVKQPRSPDGRERPPC). At serine 1138 the chain carries Phosphoserine. Residues 1510–1524 (PSSNLHVPLRSTWNS) show a composition bias toward polar residues. Basic and acidic residues predominate over residues 1536–1547 (RRIDMPPDDDWR).

This sequence belongs to the peptidase C19 family.

The enzyme catalyses Thiol-dependent hydrolysis of ester, thioester, amide, peptide and isopeptide bonds formed by the C-terminal Gly of ubiquitin (a 76-residue protein attached to proteins as an intracellular targeting signal).. Functionally, deubiquitinase that specifically mediates 'Lys-63'-linked deubiquitination of substrates with a polyubiquitin chain composed of at least 3 ubiquitins. Specifically recognizes ubiquitin chain in position S2 and catalyzes cleavage of polyubiquitin within 'Lys-63'-linked chains. Not able to deubiquitinate substrates with shorter ubiquitin chains. Mediates deubiquitination of PLK4, maintaining PLK4 stability by reducing its ubiquitination-mediated degradation. In Mus musculus (Mouse), this protein is Ubiquitin carboxyl-terminal hydrolase 54 (Usp54).